The following is a 471-amino-acid chain: MTSQLAKKAEAWSARFNEPMSDLVKRYTASVFFDKRLALFDIQGSLAHAAMLAKQGIIAEADRAAIEQGMAQIRQEIEAGTFEWKLDLEDVHLNIEARLTAMAGDAGKRLHTGRSRNDQVATDIRLWLRSEIDNIVGLLRALRGALLDLAEQHTNTIVPGFTHLQVAQPVVFGHHLLAYVEMFTRDTERMLDARKRVNRLPLGAAALAGTSYPIDREFVAQQLGFDGVCRNSLDAVSDRDFAIEFCAAAALVMTHISRFSEELVLWMSPRVGFIDIADRFCTGSSIMPQKKNPDVPELARGKTGRVNGHLIGLLTLMKGQPLAYNKDNQEDKEPLFDTVDTVVDTLRIFADMVPGITVKADAMRAAALQGYATATDLADYLVKRGLPFRDAHEAVAHAVRACDDLRCDLADLSVTQLREISGLGDKANLIGDDVHAVLTLEGSVASRNHIGGTAPEQVRLAIVAARAGLAG.

Belongs to the lyase 1 family. Argininosuccinate lyase subfamily.

It localises to the cytoplasm. It carries out the reaction 2-(N(omega)-L-arginino)succinate = fumarate + L-arginine. It participates in amino-acid biosynthesis; L-arginine biosynthesis; L-arginine from L-ornithine and carbamoyl phosphate: step 3/3. The chain is Argininosuccinate lyase from Ralstonia nicotianae (strain ATCC BAA-1114 / GMI1000) (Ralstonia solanacearum).